A 599-amino-acid chain; its full sequence is MGEALNGLKRTMMCGEPREEHVGQKITLMGWVQRNRKLGGLDFIDLRDKTGIMQVVFGEEINAEAFEKAKGVRPEYCIAVTGEVVKRESVNENMPTGFVELKCQSLKILSESETPPIYIKENLDAAENIRLKYRYLDLRRPDMHRIFEIRSKTTKSIRDYLEKNDFLDVETPMLTKSTPEGARDYLVPSRNYPGMFYALPQSPQIFKQLLMVSGFDKYYQIVKCFRDEDLRANRQPEFTQVDMELSFVEQDDIMALNEGLIAHVFKEVAGVDVKLPIKRMTFKDAMEKYGSDKPDLRFGMEITNITEDVKDMDFVVFKSAIEAGGSVRALCLKGGAALGRKPLDKLGEFVKTYKAKGLAWIQLKEDGVKSSIAKFLTDDVTNSIIETMGAETGDAILIVADKESVVFQSLGALRLELAKQFELIKDKNEFNFTWITEFPLFEYSEEEERYTACHHPFTAPMEEDLDFLESAPGKVRSKAYDLVLNGEELGGGSIRIHDMELQQRMFKALGFTEEQAWERFGFLLQAFKFGPPPHGGLAFGLDRMIMFLAGTENIKDVIAFPKNQNAYCYLSEAPNIADEKQLTELGIGILPKQEKQEQE.

Glu-180 contributes to the L-aspartate binding site. An aspartate region spans residues 204–207 (QIFK). L-aspartate is bound at residue Arg-226. ATP-binding positions include 226-228 (RDE) and Gln-235. An L-aspartate-binding site is contributed by His-454. Residue Glu-488 participates in ATP binding. Arg-495 lines the L-aspartate pocket. 540–543 (GLDR) contacts ATP.

The protein belongs to the class-II aminoacyl-tRNA synthetase family. Type 1 subfamily. As to quaternary structure, homodimer.

The protein resides in the cytoplasm. It carries out the reaction tRNA(Asp) + L-aspartate + ATP = L-aspartyl-tRNA(Asp) + AMP + diphosphate. Functionally, catalyzes the attachment of L-aspartate to tRNA(Asp) in a two-step reaction: L-aspartate is first activated by ATP to form Asp-AMP and then transferred to the acceptor end of tRNA(Asp). This Clostridium botulinum (strain Alaska E43 / Type E3) protein is Aspartate--tRNA ligase.